The chain runs to 350 residues: Hydroxymethylglutaryl-CoA synthase (350 aa).

Glutamate 83 (proton donor/acceptor) is an active-site residue. Catalysis depends on cysteine 115, which acts as the Acyl-thioester intermediate. (3S)-3-hydroxy-3-methylglutaryl-CoA is bound by residues cysteine 115 and threonine 156. Position 204 (arginine 204) interacts with CoA. Residues threonine 206 and histidine 239 each contribute to the (3S)-3-hydroxy-3-methylglutaryl-CoA site. The Proton donor/acceptor role is filled by histidine 239. Residue lysine 244 participates in CoA binding. 2 residues coordinate (3S)-3-hydroxy-3-methylglutaryl-CoA: asparagine 271 and serine 301.

The protein belongs to the thiolase-like superfamily. Archaeal HMG-CoA synthase family. In terms of assembly, interacts with acetoacetyl-CoA thiolase that catalyzes the precedent step in the pathway and with a DUF35 protein. The acetoacetyl-CoA thiolase/HMG-CoA synthase complex channels the intermediate via a fused CoA-binding site, which allows for efficient coupling of the endergonic thiolase reaction with the exergonic HMGCS reaction.

It catalyses the reaction acetoacetyl-CoA + acetyl-CoA + H2O = (3S)-3-hydroxy-3-methylglutaryl-CoA + CoA + H(+). It participates in metabolic intermediate biosynthesis; (R)-mevalonate biosynthesis; (R)-mevalonate from acetyl-CoA: step 2/3. Catalyzes the condensation of acetyl-CoA with acetoacetyl-CoA to form 3-hydroxy-3-methylglutaryl-CoA (HMG-CoA). Functions in the mevalonate (MVA) pathway leading to isopentenyl diphosphate (IPP), a key precursor for the biosynthesis of isoprenoid compounds that are building blocks of archaeal membrane lipids. This chain is Hydroxymethylglutaryl-CoA synthase, found in Pyrococcus horikoshii (strain ATCC 700860 / DSM 12428 / JCM 9974 / NBRC 100139 / OT-3).